A 127-amino-acid chain; its full sequence is Large ribosomal subunit protein bL12 (127 aa).

It belongs to the bacterial ribosomal protein bL12 family. As to quaternary structure, homodimer. Part of the ribosomal stalk of the 50S ribosomal subunit. Forms a multimeric L10(L12)X complex, where L10 forms an elongated spine to which 2 to 4 L12 dimers bind in a sequential fashion. Binds GTP-bound translation factors.

Functionally, forms part of the ribosomal stalk which helps the ribosome interact with GTP-bound translation factors. Is thus essential for accurate translation. The polypeptide is Large ribosomal subunit protein bL12 (Streptomyces coelicolor (strain ATCC BAA-471 / A3(2) / M145)).